We begin with the raw amino-acid sequence, 198 residues long: MERFILDTSVFTNPDTFNQFARDAVEATRIFLQLARRADAEFFIPGSVYEEFRLMKDLASLGGDFESVVKIRSPRRYSLTIPSEFLYELIHEVRHRIDRGLRIAEEHARMAAQPGTVADQGALITRLRERYRETLRRGIVDSREDIDVLLLAYELDGVLLSADEGLRKWADKVGVKIILPQHLRRVLENLTSCSRPQK.

It belongs to the HARP family.

It catalyses the reaction Endonucleolytic cleavage of RNA, removing 5'-extranucleotides from tRNA precursor.. Functionally, RNA-free RNase P that catalyzes the removal of the 5'-leader sequence from pre-tRNA to produce the mature 5'-terminus. The sequence is that of RNA-free ribonuclease P from Nitrosococcus oceani (strain ATCC 19707 / BCRC 17464 / JCM 30415 / NCIMB 11848 / C-107).